The chain runs to 215 residues: Small ribosomal subunit protein uS3 (215 aa).

The KH type-2 domain occupies 38–107 (IRDYIKKTYH…KFQLNIEEVK (70 aa)).

It belongs to the universal ribosomal protein uS3 family. In terms of assembly, part of the 30S ribosomal subunit. Forms a tight complex with proteins S10 and S14.

Functionally, binds the lower part of the 30S subunit head. Binds mRNA in the 70S ribosome, positioning it for translation. The protein is Small ribosomal subunit protein uS3 of Kosmotoga olearia (strain ATCC BAA-1733 / DSM 21960 / TBF 19.5.1).